The sequence spans 322 residues: Germ cell-specific gene 1-like protein (322 aa).

Residues 1 to 8 are Cytoplasmic-facing; the sequence is MELSRRNR. Residues 9-29 traverse the membrane as a helical segment; the sequence is SLLSVVLNLLALSFSVAAFFT. Residues 30 to 125 lie on the Extracellular side of the membrane; that stretch reads SYWCEGTHKV…IELSPDSEKG (96 aa). The helical transmembrane segment at 126–146 threads the bilayer; the sequence is VLWLSVISEFLYIILLSLGFL. The Cytoplasmic segment spans residues 147 to 166; the sequence is LMCLEFFSSSNFIDGLKINA. A helical membrane pass occupies residues 167–187; it reads FAAIITVLSGLLGMVAHMMYM. Residues 188–209 lie on the Extracellular side of the membrane; it reads TVFQVTVNLGPKDWRPQTWYYG. A helical transmembrane segment spans residues 210-230; sequence WSFGLAWLSFTLCMSASVLTL. Topologically, residues 231-322 are cytoplasmic; the sequence is NTYTKTILEF…MDLEDDGDQC (92 aa).

It belongs to the GSG1 family. In terms of assembly, component of the AMPAR complex.

The protein localises to the cell membrane. Its subcellular location is the synapse. Functionally, as a component of the AMPAR complex, modifies AMPA receptor (AMPAR) gating. This Xenopus tropicalis (Western clawed frog) protein is Germ cell-specific gene 1-like protein (gsg1l).